We begin with the raw amino-acid sequence, 1142 residues long: Protein lin-25 (1142 aa).

The segment covering 600–613 (IEEEIEEEEEDIEP) has biased composition (acidic residues). The interval 600-706 (IEEEIEEEEE…EKPKEPLEPT (107 aa)) is disordered. Basic and acidic residues-rich tracts occupy residues 614 to 627 (EVVKEMKESGTEKE), 652 to 662 (DEQKTEEKMDT), and 679 to 703 (DPPKVEEPAERINQEKPEEKPKEPL).

The protein resides in the nucleus. It localises to the cytoplasm. Functionally, participates in the inductive signaling pathway downstream of let-60 Ras and the RAF/MAP kinase cascade to regulate specification and differentiation of many cell types. Positively regulates the fate of vulval precursor cells. Required for induction of the P12 and excretory duct cell fates. In males, it is also required for proper formation of spicules. Does not function in the signaling pathway that promotes exit from pachytene. This Caenorhabditis briggsae protein is Protein lin-25.